Consider the following 243-residue polypeptide: Leucyl/phenylalanyl-tRNA--protein transferase (243 aa).

It belongs to the L/F-transferase family.

It is found in the cytoplasm. The catalysed reaction is N-terminal L-lysyl-[protein] + L-leucyl-tRNA(Leu) = N-terminal L-leucyl-L-lysyl-[protein] + tRNA(Leu) + H(+). It carries out the reaction N-terminal L-arginyl-[protein] + L-leucyl-tRNA(Leu) = N-terminal L-leucyl-L-arginyl-[protein] + tRNA(Leu) + H(+). The enzyme catalyses L-phenylalanyl-tRNA(Phe) + an N-terminal L-alpha-aminoacyl-[protein] = an N-terminal L-phenylalanyl-L-alpha-aminoacyl-[protein] + tRNA(Phe). Functions in the N-end rule pathway of protein degradation where it conjugates Leu, Phe and, less efficiently, Met from aminoacyl-tRNAs to the N-termini of proteins containing an N-terminal arginine or lysine. The chain is Leucyl/phenylalanyl-tRNA--protein transferase from Vibrio cholerae serotype O1 (strain ATCC 39315 / El Tor Inaba N16961).